The sequence spans 187 residues: Hypoxanthine/guanine phosphoribosyltransferase (187 aa).

It belongs to the purine/pyrimidine phosphoribosyltransferase family. Archaeal HPRT subfamily. As to quaternary structure, homodimer.

The protein resides in the cytoplasm. It catalyses the reaction IMP + diphosphate = hypoxanthine + 5-phospho-alpha-D-ribose 1-diphosphate. It carries out the reaction GMP + diphosphate = guanine + 5-phospho-alpha-D-ribose 1-diphosphate. It participates in purine metabolism; IMP biosynthesis via salvage pathway; IMP from hypoxanthine: step 1/1. Catalyzes a salvage reaction resulting in the formation of IMP that is energically less costly than de novo synthesis. The sequence is that of Hypoxanthine/guanine phosphoribosyltransferase from Methanococcus voltae (strain ATCC BAA-1334 / A3).